Reading from the N-terminus, the 221-residue chain is Enolase-phosphatase E1 (221 aa).

D9 and E11 together coordinate Mg(2+). Residues 116–117 (SS) and K152 each bind substrate. D180 is a binding site for Mg(2+).

This sequence belongs to the HAD-like hydrolase superfamily. MasA/MtnC family. As to quaternary structure, monomer. Mg(2+) is required as a cofactor.

The protein resides in the cytoplasm. Its subcellular location is the nucleus. The catalysed reaction is 5-methylsulfanyl-2,3-dioxopentyl phosphate + H2O = 1,2-dihydroxy-5-(methylsulfanyl)pent-1-en-3-one + phosphate. It participates in amino-acid biosynthesis; L-methionine biosynthesis via salvage pathway; L-methionine from S-methyl-5-thio-alpha-D-ribose 1-phosphate: step 3/6. The protein operates within amino-acid biosynthesis; L-methionine biosynthesis via salvage pathway; L-methionine from S-methyl-5-thio-alpha-D-ribose 1-phosphate: step 4/6. Functionally, bifunctional enzyme that catalyzes the enolization of 2,3-diketo-5-methylthiopentyl-1-phosphate (DK-MTP-1-P) into the intermediate 2-hydroxy-3-keto-5-methylthiopentenyl-1-phosphate (HK-MTPenyl-1-P), which is then dephosphorylated to form the acireductone 1,2-dihydroxy-3-keto-5-methylthiopentene (DHK-MTPene). The sequence is that of Enolase-phosphatase E1 from Kluyveromyces lactis (strain ATCC 8585 / CBS 2359 / DSM 70799 / NBRC 1267 / NRRL Y-1140 / WM37) (Yeast).